The sequence spans 182 residues: Lipoprotein signal peptidase (182 aa).

4 helical membrane-spanning segments follow: residues 15-35 (LYIG…FLVI), 44-64 (LEVL…FVFG), 65-85 (AFQD…VFLI), and 97-117 (PWGW…KFFV). Active-site residues include D140 and D162. A helical membrane pass occupies residues 155 to 175 (WPAFNVADSCVTIGLTILIFT).

It belongs to the peptidase A8 family.

Its subcellular location is the cell inner membrane. It catalyses the reaction Release of signal peptides from bacterial membrane prolipoproteins. Hydrolyzes -Xaa-Yaa-Zaa-|-(S,diacylglyceryl)Cys-, in which Xaa is hydrophobic (preferably Leu), and Yaa (Ala or Ser) and Zaa (Gly or Ala) have small, neutral side chains.. Its pathway is protein modification; lipoprotein biosynthesis (signal peptide cleavage). Functionally, this protein specifically catalyzes the removal of signal peptides from prolipoproteins. The polypeptide is Lipoprotein signal peptidase (Leptospira borgpetersenii serovar Hardjo-bovis (strain L550)).